The sequence spans 119 residues: Movement protein TGB2 (119 aa).

The Cytoplasmic segment spans residues 1-13 (MVRNNEIGARPNK). The chain crosses the membrane as a helical span at residues 14-34 (YWPVVAAVVAICLFGFLTVTN). Topologically, residues 35–79 (QKHATQSGDNIHKFANGGQYRDGSKSIKYNCNNPRAYNGSSSNIT) are lumenal. Residues 80–100 (FSQLFLPVLLIGAALYAYLWF) form a helical membrane-spanning segment. The Cytoplasmic portion of the chain corresponds to 101 to 119 (TRPDCSVTCRGDCCRSYGG).

The protein belongs to the virgaviridae/benyvirus TGB2 movement protein family. As to quaternary structure, interacts with movement protein TGB3. TGB1-TGB3-TGB2 complex formation is enhanced by ATP hydrolysis.

It localises to the host cell junction. The protein localises to the host plasmodesma. The protein resides in the host endoplasmic reticulum membrane. Its subcellular location is the host cytoplasm. It is found in the host cytoskeleton. It localises to the host chloroplast envelope. Its function is as follows. Participates in the transport of viral genome to neighboring plant cells directly through plasmodesmata, without any budding. TGBp2 and TGBp3 are necessary for intracellular delivery of TGBp1-containing vRNPs to plasmodesmata. Can gate plasmodesmata and increase their size exclusion limit. To a lesser extent than TGB3, induces host actin cytoskeleton network thickening, which probably plays a major role in virus cell-to-cell movement. Binds ssRNA in a sequence non-specific manner. This chain is Movement protein TGB2, found in Potato mop-top virus (isolate Potato/Sweden/Sw) (PMTV).